The chain runs to 423 residues: Imidazolonepropionase (423 aa).

Fe(3+) is bound by residues His78 and His80. Positions 78 and 80 each coordinate Zn(2+). 3 residues coordinate 4-imidazolone-5-propanoate: Arg87, Tyr150, and His183. Tyr150 is a binding site for N-formimidoyl-L-glutamate. His247 contacts Fe(3+). His247 contacts Zn(2+). Residue Glu250 coordinates 4-imidazolone-5-propanoate. Asp322 lines the Fe(3+) pocket. Asp322 lines the Zn(2+) pocket. Positions 324 and 326 each coordinate N-formimidoyl-L-glutamate. Residue Ser327 participates in 4-imidazolone-5-propanoate binding.

Belongs to the metallo-dependent hydrolases superfamily. HutI family. Zn(2+) is required as a cofactor. Requires Fe(3+) as cofactor.

It localises to the cytoplasm. The enzyme catalyses 4-imidazolone-5-propanoate + H2O = N-formimidoyl-L-glutamate. It functions in the pathway amino-acid degradation; L-histidine degradation into L-glutamate; N-formimidoyl-L-glutamate from L-histidine: step 3/3. Functionally, catalyzes the hydrolytic cleavage of the carbon-nitrogen bond in imidazolone-5-propanoate to yield N-formimidoyl-L-glutamate. It is the third step in the universal histidine degradation pathway. The polypeptide is Imidazolonepropionase (Bacillus cereus (strain G9842)).